A 22-amino-acid polypeptide reads, in one-letter code: Chitin-binding protein 3 (22 aa).

Post-translationally, glycosylated; contains 2.5% carbohydrates.

Its function is as follows. Chitin-binding protein. Has antifungal activity against F.solani, F.oxysporum, C.musae and C.gloesporoides but not against P.oligandrum. Depending on concentration the antifungal activity can be fungistatic or fungicidal. Inhibits both spore germination and mycelial growth in F.solani at a concentration of 0.1 mg/ml. Has antifungal activity against C.krusei, C.albicans, C.tropicalis and C.parapsilosis. Has no chitinase, beta-glucanase or hemagglutinating activity. Acts as a flocculent. This chain is Chitin-binding protein 3, found in Moringa oleifera (Horseradish tree).